The primary structure comprises 512 residues: D-alanine--D-alanyl carrier protein ligase (512 aa).

152–153 contacts ATP; it reads TS. A D-alanine-binding site is contributed by Asp-199. Residue 294-299 participates in ATP binding; it reads NAYGPT. Val-303 serves as a coordination point for D-alanine. Residues Asp-385, 397–400, and Lys-499 each bind ATP; that span reads YGGR. Lys-499 contacts D-alanine.

The protein belongs to the ATP-dependent AMP-binding enzyme family. DltA subfamily.

Its subcellular location is the cytoplasm. The enzyme catalyses holo-[D-alanyl-carrier protein] + D-alanine + ATP = D-alanyl-[D-alanyl-carrier protein] + AMP + diphosphate. It participates in cell wall biogenesis; lipoteichoic acid biosynthesis. In terms of biological role, catalyzes the first step in the D-alanylation of lipoteichoic acid (LTA), the activation of D-alanine and its transfer onto the D-alanyl carrier protein (Dcp) DltC. In an ATP-dependent two-step reaction, forms a high energy D-alanyl-AMP intermediate, followed by transfer of the D-alanyl residue as a thiol ester to the phosphopantheinyl prosthetic group of the Dcp. D-alanylation of LTA plays an important role in modulating the properties of the cell wall in Gram-positive bacteria, influencing the net charge of the cell wall. The sequence is that of D-alanine--D-alanyl carrier protein ligase from Streptococcus pyogenes serotype M1.